Here is a 196-residue protein sequence, read N- to C-terminus: MKESIAKVYRKTGETEIKSEINLYGEGKCDIKTGIVFLDHMLNLMARHGLIDLKLQAQGDLQVDSHHTVEDVGIVLGQCFKEALGDKKSIKRYGTSFIPMDEALASVSIDISGRPYIVCDFNFTVDKLGELDTELVEEFLRALTFNAGITLHARVLYGKNNHHMIEAVFKALGRALREAVDKDKRINGVMSTKGIL.

Belongs to the imidazoleglycerol-phosphate dehydratase family.

Its subcellular location is the cytoplasm. It carries out the reaction D-erythro-1-(imidazol-4-yl)glycerol 3-phosphate = 3-(imidazol-4-yl)-2-oxopropyl phosphate + H2O. It participates in amino-acid biosynthesis; L-histidine biosynthesis; L-histidine from 5-phospho-alpha-D-ribose 1-diphosphate: step 6/9. The chain is Imidazoleglycerol-phosphate dehydratase from Clostridium botulinum (strain 657 / Type Ba4).